The chain runs to 168 residues: Large ribosomal subunit protein uL10 (168 aa).

The protein belongs to the universal ribosomal protein uL10 family. Part of the ribosomal stalk of the 50S ribosomal subunit. The N-terminus interacts with L11 and the large rRNA to form the base of the stalk. The C-terminus forms an elongated spine to which L12 dimers bind in a sequential fashion forming a multimeric L10(L12)X complex.

Forms part of the ribosomal stalk, playing a central role in the interaction of the ribosome with GTP-bound translation factors. In Ralstonia pickettii (strain 12J), this protein is Large ribosomal subunit protein uL10.